The primary structure comprises 59 residues: Large ribosomal subunit protein bL32 (59 aa).

A compositionally biased stretch (basic residues) spans M1–N15. The disordered stretch occupies residues M1–M48.

Belongs to the bacterial ribosomal protein bL32 family.

This Opitutus terrae (strain DSM 11246 / JCM 15787 / PB90-1) protein is Large ribosomal subunit protein bL32.